Reading from the N-terminus, the 48-residue chain is uncharacterized protein (48 aa).

The interval M1–G20 is disordered.

This is an uncharacterized protein from Bacillus subtilis (strain 168).